The following is a 334-amino-acid chain: tRNA N6-adenosine threonylcarbamoyltransferase (334 aa).

Fe cation contacts are provided by His-112 and His-116. Substrate is bound by residues 135–139 (VVSGG), Asp-168, Gly-181, Asp-185, and Asn-274. Asp-303 lines the Fe cation pocket.

Belongs to the KAE1 / TsaD family. Fe(2+) serves as cofactor.

The protein localises to the cytoplasm. It catalyses the reaction L-threonylcarbamoyladenylate + adenosine(37) in tRNA = N(6)-L-threonylcarbamoyladenosine(37) in tRNA + AMP + H(+). Required for the formation of a threonylcarbamoyl group on adenosine at position 37 (t(6)A37) in tRNAs that read codons beginning with adenine. Is involved in the transfer of the threonylcarbamoyl moiety of threonylcarbamoyl-AMP (TC-AMP) to the N6 group of A37, together with TsaE and TsaB. TsaD likely plays a direct catalytic role in this reaction. The sequence is that of tRNA N6-adenosine threonylcarbamoyltransferase from Anaeromyxobacter dehalogenans (strain 2CP-C).